The primary structure comprises 228 residues: Glycosylphosphatidylinositol-anchored high density lipoprotein-binding protein 1 (228 aa).

A signal peptide spans 1–22 (MKALRAVLLILLLSGQPGSGWA). A disordered region spans residues 21–32 (WAQEDGDADPEP). The interval 24-48 (EDGDADPEPENYNYDDDDDEEEEEE) is important for LPL transport to the lumenal surface of endothelial cells. The span at 24-49 (EDGDADPEPENYNYDDDDDEEEEEET) shows a compositional bias: acidic residues. A Sulfotyrosine modification is found at Y35. Residues 61–148 (LQCYFCQVLH…PWQNPQVQNP (88 aa)) form the UPAR/Ly6 domain. Disulfide bonds link C63–C88, C66–C75, C81–C109, C113–C129, and C130–C135. Residue N76 is glycosylated (N-linked (GlcNAc...) asparagine). The important for interaction with LPL stretch occupies residues 102–108 (LTTYSMW). A disordered region spans residues 145 to 200 (VQNPLGGRADSPLESGTRHPQGGKFSHPQVVKAAHPQSDGANLPKSGKANQPQGSG). The GPI-anchor amidated glycine moiety is linked to residue G198. Residues 199–228 (SGAGYPSGWTKFGNIALLLSFFTCLWASGA) constitute a propeptide, removed in mature form.

In terms of assembly, mostly monomer, but also homodimer and homooligomer. Interacts with lipoprotein lipase (LPL). Interacts with high affinity with high-density lipoprotein (HDL). Interacts with chylomicrons. Interacts with APOA5. In terms of processing, glycosylation of Asn-76 is critical for cell surface localization. Post-translationally, sulfation of a Tyr in the N-terminal acidic region increases the affinity for LPL. As to expression, detected in fat tissue. Detected on the luminal surface of capillary endothelial cells in heart, skeletal muscle and brown adipose tissue (at protein level). Detected in heart and brown adipose tissue. Expressed at lower levels in lung and liver.

It localises to the apical cell membrane. The protein resides in the basolateral cell membrane. It is found in the cell membrane. Functionally, mediates the transport of lipoprotein lipase LPL from the basolateral to the apical surface of endothelial cells in capillaries. Anchors LPL on the surface of endothelial cells in the lumen of blood capillaries. Thereby, plays an important role in lipolytic processing of chylomicrons by LPL, triglyceride metabolism and lipid homeostasis. Binds chylomicrons and phospholipid particles that contain APOA5. Binds high-density lipoprotein (HDL) and plays a role in the uptake of lipids from HDL. In Mus musculus (Mouse), this protein is Glycosylphosphatidylinositol-anchored high density lipoprotein-binding protein 1.